The following is a 188-amino-acid chain: MIFKDYDFLQNYDLKNFEEKVKIYKELLSKFNRIHNLTHLKNIDENIFDSIKILDFYDFSKAKNIADIGSGAGFPAVFLAFLLQSNFHLFEPNPKKAAFLRTLKIECELPNLHIYKEKVQEYKNTFKADIITSRALMDVKPLLEICKNLKDENTVFILWKGSEIYQELENIKDYEIFENNLRRYCILK.

S-adenosyl-L-methionine contacts are provided by residues Gly-69, Phe-74, Val-119 to Gln-120, and Arg-134.

The protein belongs to the methyltransferase superfamily. RNA methyltransferase RsmG family.

It localises to the cytoplasm. The catalysed reaction is guanosine(527) in 16S rRNA + S-adenosyl-L-methionine = N(7)-methylguanosine(527) in 16S rRNA + S-adenosyl-L-homocysteine. Specifically methylates the N7 position of guanine in position 527 of 16S rRNA. The polypeptide is Ribosomal RNA small subunit methyltransferase G (Campylobacter jejuni subsp. jejuni serotype O:23/36 (strain 81-176)).